The chain runs to 176 residues: Peptide deformylase 1 (176 aa).

Fe cation is bound by residues Cys99 and His141. Glu142 is an active-site residue. His145 is a Fe cation binding site.

Belongs to the polypeptide deformylase family. Requires Fe(2+) as cofactor.

The enzyme catalyses N-terminal N-formyl-L-methionyl-[peptide] + H2O = N-terminal L-methionyl-[peptide] + formate. Its function is as follows. Removes the formyl group from the N-terminal Met of newly synthesized proteins. Requires at least a dipeptide for an efficient rate of reaction. N-terminal L-methionine is a prerequisite for activity but the enzyme has broad specificity at other positions. The sequence is that of Peptide deformylase 1 from Bordetella pertussis (strain Tohama I / ATCC BAA-589 / NCTC 13251).